The primary structure comprises 122 residues: Large ribosomal subunit protein uL14 (122 aa).

This sequence belongs to the universal ribosomal protein uL14 family. In terms of assembly, part of the 50S ribosomal subunit. Forms a cluster with proteins L3 and L19. In the 70S ribosome, L14 and L19 interact and together make contacts with the 16S rRNA in bridges B5 and B8.

Binds to 23S rRNA. Forms part of two intersubunit bridges in the 70S ribosome. The protein is Large ribosomal subunit protein uL14 of Pelodictyon phaeoclathratiforme (strain DSM 5477 / BU-1).